The primary structure comprises 213 residues: Gas vesicle protein F (213 aa).

This sequence belongs to the gas vesicle GvpF/GvpL family. Binds GvpA.

It localises to the gas vesicle. Its function is as follows. A minor component of the gas vesicle, may be involved in preventing GvpA aggregation during gas vesicle nucleation. Gas vesicles are hollow, gas filled proteinaceous nanostructures found in some microorganisms. They allow positioning of halobacteria at the optimal depth for growth in the poorly aerated, shallow brine pools of their habitat. In terms of biological role, expression of a 9.5 kb mc-vac DNA fragment containing 2 divergently transcribed regions (gvpD-gvpE-gvpF-gvpG-gvpH-gvpI-gvpJ-gvpK-gvpL-gvpM and gvpA-gvpC-gvpN-gvpO) allows H.volcanii to produce gas vesicles. The polypeptide is Gas vesicle protein F (Haloferax mediterranei (strain ATCC 33500 / DSM 1411 / JCM 8866 / NBRC 14739 / NCIMB 2177 / R-4) (Halobacterium mediterranei)).